Reading from the N-terminus, the 305-residue chain is Protoheme IX farnesyltransferase (305 aa).

The next 9 helical transmembrane spans lie at 31–51, 53–73, 98–118, 124–144, 153–173, 181–201, 221–241, 242–262, and 285–305; these read IQVLLLITTAGAMWIAGKGHV, PLLLLVTLLGGTLAASSANAF, ILPWQAALFATALGVASFAVL, LFAALLAISGIGFYVVIYTLW, IVIGGAAGAIPPLVGWAAVTG, VLFGIIFMWTPPHFWALAMMI, ATARQIFIYTLVLVPVTLVLY, PLGTMGWIYLLAAGALGLWLI, and SIFYLMLLFVAMGIDSIFLFA.

The protein belongs to the UbiA prenyltransferase family. Protoheme IX farnesyltransferase subfamily.

The protein localises to the cell inner membrane. The catalysed reaction is heme b + (2E,6E)-farnesyl diphosphate + H2O = Fe(II)-heme o + diphosphate. It functions in the pathway porphyrin-containing compound metabolism; heme O biosynthesis; heme O from protoheme: step 1/1. Functionally, converts heme B (protoheme IX) to heme O by substitution of the vinyl group on carbon 2 of heme B porphyrin ring with a hydroxyethyl farnesyl side group. This is Protoheme IX farnesyltransferase from Gloeobacter violaceus (strain ATCC 29082 / PCC 7421).